A 931-amino-acid chain; its full sequence is Glycine dehydrogenase (decarboxylating) (931 aa).

Lys684 carries the post-translational modification N6-(pyridoxal phosphate)lysine.

This sequence belongs to the GcvP family. As to quaternary structure, the glycine cleavage system is composed of four proteins: P, T, L and H. The cofactor is pyridoxal 5'-phosphate.

It carries out the reaction N(6)-[(R)-lipoyl]-L-lysyl-[glycine-cleavage complex H protein] + glycine + H(+) = N(6)-[(R)-S(8)-aminomethyldihydrolipoyl]-L-lysyl-[glycine-cleavage complex H protein] + CO2. In terms of biological role, the glycine cleavage system catalyzes the degradation of glycine. The P protein binds the alpha-amino group of glycine through its pyridoxal phosphate cofactor; CO(2) is released and the remaining methylamine moiety is then transferred to the lipoamide cofactor of the H protein. The sequence is that of Glycine dehydrogenase (decarboxylating) from Bartonella henselae (strain ATCC 49882 / DSM 28221 / CCUG 30454 / Houston 1) (Rochalimaea henselae).